A 441-amino-acid chain; its full sequence is Cysteine--tRNA ligase (441 aa).

Cys-24 is a binding site for Zn(2+). The short motif at 26 to 36 is the 'HIGH' region element; the sequence is PTVYNYIHIGN. Zn(2+) contacts are provided by Cys-204, His-230, and Glu-234. The 'KMSKS' region motif lies at 262–266; it reads KMSKS. Lys-265 lines the ATP pocket.

The protein belongs to the class-I aminoacyl-tRNA synthetase family. As to quaternary structure, monomer. The cofactor is Zn(2+).

Its subcellular location is the cytoplasm. It catalyses the reaction tRNA(Cys) + L-cysteine + ATP = L-cysteinyl-tRNA(Cys) + AMP + diphosphate. In Mycoplasma mycoides subsp. mycoides SC (strain CCUG 32753 / NCTC 10114 / PG1), this protein is Cysteine--tRNA ligase.